Reading from the N-terminus, the 260-residue chain is 3'-5' ssDNA/RNA exonuclease TatD (260 aa).

A divalent metal cation-binding residues include E91, H127, and H152.

This sequence belongs to the metallo-dependent hydrolases superfamily. TatD-type hydrolase family. TatD subfamily. In terms of assembly, monomer. Mg(2+) is required as a cofactor.

The protein localises to the cytoplasm. Functionally, 3'-5' exonuclease that prefers single-stranded DNA and RNA. May play a role in the H(2)O(2)-induced DNA damage repair. The protein is 3'-5' ssDNA/RNA exonuclease TatD of Enterobacter lignolyticus (strain SCF1).